The sequence spans 246 residues: UDP-N-acetyl-D-mannosaminuronic acid transferase (246 aa).

Belongs to the glycosyltransferase 26 family.

It carries out the reaction UDP-N-acetyl-alpha-D-mannosaminouronate + N-acetyl-alpha-D-glucosaminyl-di-trans,octa-cis-undecaprenyl diphosphate = beta-D-ManNAcA-(1-&gt;4)-alpha-D-GlcNAc-di-trans,octa-cis-undecaprenyl diphosphate + UDP + H(+). It functions in the pathway bacterial outer membrane biogenesis; enterobacterial common antigen biosynthesis. Catalyzes the synthesis of Und-PP-GlcNAc-ManNAcA (Lipid II), the second lipid-linked intermediate involved in enterobacterial common antigen (ECA) synthesis. This Escherichia coli O157:H7 protein is UDP-N-acetyl-D-mannosaminuronic acid transferase.